A 589-amino-acid chain; its full sequence is Isocitrate dehydrogenase kinase/phosphatase (589 aa).

Residues Ala317–Met323 and Lys338 contribute to the ATP site. Residue Asp373 is part of the active site.

It belongs to the AceK family.

The protein resides in the cytoplasm. It carries out the reaction L-seryl-[isocitrate dehydrogenase] + ATP = O-phospho-L-seryl-[isocitrate dehydrogenase] + ADP + H(+). In terms of biological role, bifunctional enzyme which can phosphorylate or dephosphorylate isocitrate dehydrogenase (IDH) on a specific serine residue. This is a regulatory mechanism which enables bacteria to bypass the Krebs cycle via the glyoxylate shunt in response to the source of carbon. When bacteria are grown on glucose, IDH is fully active and unphosphorylated, but when grown on acetate or ethanol, the activity of IDH declines drastically concomitant with its phosphorylation. This Colwellia psychrerythraea (strain 34H / ATCC BAA-681) (Vibrio psychroerythus) protein is Isocitrate dehydrogenase kinase/phosphatase.